We begin with the raw amino-acid sequence, 219 residues long: Non-specific lipid transfer protein GPI-anchored 25 (219 aa).

An N-terminal signal peptide occupies residues 1–22 (MATKITGVFILILTITFSSSSA). Cystine bridges form between C39–C85, C49–C68, C69–C110, and C83–C123. Residue N59 is glycosylated (N-linked (GlcNAc...) asparagine). N148 carries an N-linked (GlcNAc...) asparagine glycan. Positions 152 to 181 (SPQSVDLAPEVSPSSDLFSPETATLAPPPP) are disordered. S192 carries the GPI-anchor amidated serine lipid modification. Positions 193 to 219 (SDSLKIRNFWFPSTIIMTFATSILARI) are cleaved as a propeptide — removed in mature form.

This sequence belongs to the plant LTP family.

Its subcellular location is the cell membrane. Its function is as follows. Probable lipid transfer protein. The chain is Non-specific lipid transfer protein GPI-anchored 25 from Arabidopsis thaliana (Mouse-ear cress).